A 360-amino-acid polypeptide reads, in one-letter code: UDP-N-acetylglucosamine--N-acetylmuramyl-(pentapeptide) pyrophosphoryl-undecaprenol N-acetylglucosamine transferase (360 aa).

UDP-N-acetyl-alpha-D-glucosamine contacts are provided by Ser-198 and Gln-289.

This sequence belongs to the glycosyltransferase 28 family. MurG subfamily.

The protein resides in the cell membrane. It catalyses the reaction Mur2Ac(oyl-L-Ala-gamma-D-Glu-L-Lys-D-Ala-D-Ala)-di-trans,octa-cis-undecaprenyl diphosphate + UDP-N-acetyl-alpha-D-glucosamine = beta-D-GlcNAc-(1-&gt;4)-Mur2Ac(oyl-L-Ala-gamma-D-Glu-L-Lys-D-Ala-D-Ala)-di-trans,octa-cis-undecaprenyl diphosphate + UDP + H(+). Its pathway is cell wall biogenesis; peptidoglycan biosynthesis. Its function is as follows. Cell wall formation. Catalyzes the transfer of a GlcNAc subunit on undecaprenyl-pyrophosphoryl-MurNAc-pentapeptide (lipid intermediate I) to form undecaprenyl-pyrophosphoryl-MurNAc-(pentapeptide)GlcNAc (lipid intermediate II). In Streptococcus pyogenes serotype M18 (strain MGAS8232), this protein is UDP-N-acetylglucosamine--N-acetylmuramyl-(pentapeptide) pyrophosphoryl-undecaprenol N-acetylglucosamine transferase.